The sequence spans 283 residues: Non-selective voltage-gated ion channel VDAC3 (283 aa).

Cysteine 2 is subject to N-acetylcysteine. Threonine 4 carries the post-translational modification Phosphothreonine. Residues lysine 12, lysine 15, and lysine 20 each carry the N6-acetyllysine modification. Transmembrane regions (beta stranded) follow at residues 26 to 35 (MVKIDLKTKS) and 39 to 47 (VEFSTSGHA). Lysine 53 participates in a covalent cross-link: Glycyl lysine isopeptide (Lys-Gly) (interchain with G-Cter in ubiquitin). The next 3 membrane-spanning stretches (beta stranded) occupy residues 54-64 (ASGNLETKYKV), 69-76 (LTFTQKWN), and 80-89 (TLGTEISWEN). An N6-acetyllysine modification is found at lysine 90. A beta stranded transmembrane segment spans residues 95–104 (LKLTLDTIFV). Residues lysine 109 and lysine 110 each participate in a glycyl lysine isopeptide (Lys-Gly) (interchain with G-Cter in ubiquitin) cross-link. A run of 10 beta stranded transmembrane segments spans residues 111-120 (SGKLKASYRR), 123-130 (FSLGSNVD), 137-145 (TIYGWAVLA), 150-158 (LAGYQMSFD), 163-175 (KLSQNNFALGYKA), 178-185 (FQLHTHVN), 189-198 (EFGGSIYQKV), 202-211 (IETSINLAWT), 218-227 (RFGIAAKYKL), and 231-238 (TSLSAKVN). A Phosphoserine modification is found at serine 241. NAD(+) contacts are provided by residues 242–244 (LIG) and 260–264 (SALID). 2 beta stranded membrane passes run 242–251 (LIGLGYTQTL) and 254–263 (GVKLTLSALI). Lysine 266 is subject to N6-acetyllysine; alternate. Lysine 266 participates in a covalent cross-link: Glycyl lysine isopeptide (Lys-Gly) (interchain with G-Cter in ubiquitin); alternate. The beta stranded transmembrane segment at 273–282 (HKVGLGFELE) threads the bilayer.

Belongs to the eukaryotic mitochondrial porin family. As to quaternary structure, interacts with ARMC12 in a TBC1D21-dependent manner. Interacts with MISFA. Ubiquitinated by PRKN during mitophagy, leading to its degradation and enhancement of mitophagy. Deubiquitinated by USP30. In terms of tissue distribution, highest levels of expression detected in testis, less but still abundant expression in heart, kidney, brain, and skeletal muscle.

It is found in the mitochondrion outer membrane. It localises to the membrane. The catalysed reaction is chloride(in) = chloride(out). The enzyme catalyses K(+)(in) = K(+)(out). Non-selective voltage-gated ion channel that mediates the transport of anions and cations through the mitochondrion outer membrane and plasma membrane. Forms a high-conducting channel with a stable open state and a voltage-induced closure with a mild preference for anions over cations. Involved in male fertility and sperm mitochondrial sheath formation. The protein is Non-selective voltage-gated ion channel VDAC3 of Mus musculus (Mouse).